Reading from the N-terminus, the 477-residue chain is Enolase 1, chloroplastic (477 aa).

A chloroplast-targeting transit peptide spans 1–41 (MALTTKPHHLQRSFLSPSRVSGERYLESAPSCLRFRRSGVQ). The substrate site is built by histidine 203 and glutamate 212. Residue glutamate 255 is the Proton donor of the active site. Residues aspartate 290, glutamate 340, and aspartate 365 each contribute to the Mg(2+) site. Substrate contacts are provided by glutamate 340 and aspartate 365. Lysine 390 acts as the Proton acceptor in catalysis. Residues 417 to 420 (SHRS) and lysine 441 each bind substrate. Serine 476 carries the phosphoserine modification.

This sequence belongs to the enolase family. The cofactor is Mg(2+). Highly expressed in young roots, young siliques, and shoot apex. Lowly expressed in young leaves, stems and cotyledons.

Its subcellular location is the plastid. The protein localises to the chloroplast. It catalyses the reaction (2R)-2-phosphoglycerate = phosphoenolpyruvate + H2O. Its pathway is carbohydrate degradation; glycolysis; pyruvate from D-glyceraldehyde 3-phosphate: step 4/5. The polypeptide is Enolase 1, chloroplastic (ENO1) (Arabidopsis thaliana (Mouse-ear cress)).